A 291-amino-acid polypeptide reads, in one-letter code: Ribose-phosphate pyrophosphokinase (291 aa).

ATP contacts are provided by residues 34-36 and 93-94; these read DGE and RQ. Mg(2+)-binding residues include His-127 and Asp-165. Residue Lys-188 is part of the active site. D-ribose 5-phosphate is bound by residues Arg-190, Asp-216, and 220-224; that span reads STGGT.

This sequence belongs to the ribose-phosphate pyrophosphokinase family. Class III (archaeal) subfamily. The cofactor is Mg(2+).

The protein resides in the cytoplasm. It carries out the reaction D-ribose 5-phosphate + ATP = 5-phospho-alpha-D-ribose 1-diphosphate + AMP + H(+). It participates in metabolic intermediate biosynthesis; 5-phospho-alpha-D-ribose 1-diphosphate biosynthesis; 5-phospho-alpha-D-ribose 1-diphosphate from D-ribose 5-phosphate (route I): step 1/1. Functionally, involved in the biosynthesis of the central metabolite phospho-alpha-D-ribosyl-1-pyrophosphate (PRPP) via the transfer of pyrophosphoryl group from ATP to 1-hydroxyl of ribose-5-phosphate (Rib-5-P). The sequence is that of Ribose-phosphate pyrophosphokinase from Sulfurisphaera tokodaii (strain DSM 16993 / JCM 10545 / NBRC 100140 / 7) (Sulfolobus tokodaii).